Reading from the N-terminus, the 310-residue chain is Aspartate carbamoyltransferase catalytic subunit (310 aa).

2 residues coordinate carbamoyl phosphate: R55 and T56. Position 83 (K83) interacts with L-aspartate. R105, H133, and Q136 together coordinate carbamoyl phosphate. The L-aspartate site is built by R166 and R220. Carbamoyl phosphate is bound by residues G261 and P262.

The protein belongs to the aspartate/ornithine carbamoyltransferase superfamily. ATCase family. As to quaternary structure, heterododecamer (2C3:3R2) of six catalytic PyrB chains organized as two trimers (C3), and six regulatory PyrI chains organized as three dimers (R2).

It carries out the reaction carbamoyl phosphate + L-aspartate = N-carbamoyl-L-aspartate + phosphate + H(+). The protein operates within pyrimidine metabolism; UMP biosynthesis via de novo pathway; (S)-dihydroorotate from bicarbonate: step 2/3. In terms of biological role, catalyzes the condensation of carbamoyl phosphate and aspartate to form carbamoyl aspartate and inorganic phosphate, the committed step in the de novo pyrimidine nucleotide biosynthesis pathway. This chain is Aspartate carbamoyltransferase catalytic subunit, found in Chlorobium phaeovibrioides (strain DSM 265 / 1930) (Prosthecochloris vibrioformis (strain DSM 265)).